A 336-amino-acid polypeptide reads, in one-letter code: Phosphate acyltransferase (336 aa).

Belongs to the PlsX family. Homodimer. Probably interacts with PlsY.

It localises to the cytoplasm. It catalyses the reaction a fatty acyl-[ACP] + phosphate = an acyl phosphate + holo-[ACP]. Its pathway is lipid metabolism; phospholipid metabolism. Functionally, catalyzes the reversible formation of acyl-phosphate (acyl-PO(4)) from acyl-[acyl-carrier-protein] (acyl-ACP). This enzyme utilizes acyl-ACP as fatty acyl donor, but not acyl-CoA. The chain is Phosphate acyltransferase from Pseudomonas fluorescens (strain ATCC BAA-477 / NRRL B-23932 / Pf-5).